Consider the following 451-residue polypeptide: MPHSMSRAETLAPIHVVGGGLAGTEAAWQIAQLGVPVILSEMRPVRQSPAHHTDQLGELVCSNSFGALASDRAAGLLKEELRQLGSLVIATADRHAVPAGGALAVDRARFSQALTEAIANHPLITLRREEVTGIPEGIAVLCTGPLTSEPLAKALQAFTGLEYLSFFDASSPIVTGDSLNRAVVFQASRYDKGEAAYLNCPMTEAEYERFCQALVEAEQVPLKDFEKEERKFFEGCLPIEEMARRGKDTLRFGPLKPVGLVDPRTGSRPYAVVQLRQEDRAGKLWNLVGFQTNLKWGEQQRVFRLIPGLEAAEFVRFGVMHRNTFLNSPQLLLPTLQFRRRPTLLAAGQLVGTEGYACAVAGGWLAGQNAARLALGLPLITLPPETMMGSLFQFISSADPKHFQPMPANFGLLPELEGQKVRSKQERYARYRDRALAALAATGLVRQAQTA.

FAD is bound at residue Gly18–Gly23.

Belongs to the MnmG family. TrmFO subfamily. Requires FAD as cofactor.

It localises to the cytoplasm. It catalyses the reaction uridine(54) in tRNA + (6R)-5,10-methylene-5,6,7,8-tetrahydrofolate + NADH + H(+) = 5-methyluridine(54) in tRNA + (6S)-5,6,7,8-tetrahydrofolate + NAD(+). The catalysed reaction is uridine(54) in tRNA + (6R)-5,10-methylene-5,6,7,8-tetrahydrofolate + NADPH + H(+) = 5-methyluridine(54) in tRNA + (6S)-5,6,7,8-tetrahydrofolate + NADP(+). Catalyzes the folate-dependent formation of 5-methyl-uridine at position 54 (M-5-U54) in all tRNAs. This Synechococcus sp. (strain JA-3-3Ab) (Cyanobacteria bacterium Yellowstone A-Prime) protein is Methylenetetrahydrofolate--tRNA-(uracil-5-)-methyltransferase TrmFO.